Reading from the N-terminus, the 158-residue chain is SPDGEYAEETGLEKEQIVVLRRAFDSFDRDKKGYISPETVSDILRMMGIKVSSTSFKQIIEEIDEDGSGQIEFSEFLQLAAKFLIEEDEEAMMKELKEAFRLYDKEGNGYITTQTLKEILHELDARLTAEELVGIIEEIDEDGSGTVDFDEFMAMMTG.

The residue at position 1 (Ser-1) is an N-acetylserine. 4 consecutive EF-hand domains span residues 15–50 (EQIV…MGIK), 51–86 (VSST…FLIE), 91–126 (AMMK…LDAR), and 127–158 (LTAE…MMTG). 5 residues coordinate Ca(2+): Asp-64, Asp-66, Ser-68, Gln-70, and Glu-75. Ca(2+) is bound by residues Asp-140, Asp-142, Ser-144, Thr-146, and Glu-151.

Belongs to the troponin C family.

In terms of biological role, troponin is the central regulatory protein of striated muscle contraction. Tn consists of three components: Tn-I which is the inhibitor of actomyosin ATPase, Tn-T which contains the binding site for tropomyosin and Tn-C. The binding of calcium to Tn-C abolishes the inhibitory action of Tn on actin filaments. The sequence is that of Troponin C, isoform 1 from Balanus nubilus (Giant acorn barnacle).